The primary structure comprises 238 residues: Thrombin-like enzyme gyroxin B2.1 (238 aa).

One can recognise a Peptidase S1 domain in the interval 1-229; that stretch reads VIGGDECNIN…HLDWIQNIIA (229 aa). Cystine bridges form between Cys-7-Cys-141, Cys-28-Cys-44, Cys-78-Cys-236, Cys-120-Cys-190, Cys-152-Cys-169, and Cys-180-Cys-205. Catalysis depends on His-43, which acts as the Charge relay system. A glycan (N-linked (GlcNAc...) asparagine) is linked at Asn-81. Asp-88 serves as the catalytic Charge relay system. The active-site Charge relay system is Ser-184.

The protein belongs to the peptidase S1 family. Snake venom subfamily. In terms of assembly, monomer. Expressed by the venom gland.

The protein resides in the secreted. Thrombin-like snake venom serine protease. Displays a specificity similar to trypsin. Releases only fibrinopeptide A in the conversion of fibrinogen (FGA) to fibrin. Shows coagulant, esterase and amidase activities. Reversibly increases the permeability of the blood brain barrier (BBB) in mice. Induces the barrel rotation syndrome in mice, which is manifested by gyroxin-like, rapid rolling motions. This syndrome may be due to its effect on BBB permeability, and certainly also to other actions affecting endogenous substrates present in the endothelium, nervous tissues or blood. The chain is Thrombin-like enzyme gyroxin B2.1 from Crotalus durissus terrificus (South American rattlesnake).